The sequence spans 231 residues: Large ribosomal subunit protein uL1 (231 aa).

It belongs to the universal ribosomal protein uL1 family. As to quaternary structure, part of the 50S ribosomal subunit.

In terms of biological role, binds directly to 23S rRNA. The L1 stalk is quite mobile in the ribosome, and is involved in E site tRNA release. Protein L1 is also a translational repressor protein, it controls the translation of the L11 operon by binding to its mRNA. The sequence is that of Large ribosomal subunit protein uL1 from Moorella thermoacetica (strain ATCC 39073 / JCM 9320).